The following is a 347-amino-acid chain: Phosphoribosylformylglycinamidine cyclo-ligase (347 aa).

The protein belongs to the AIR synthase family.

It localises to the cytoplasm. The catalysed reaction is 2-formamido-N(1)-(5-O-phospho-beta-D-ribosyl)acetamidine + ATP = 5-amino-1-(5-phospho-beta-D-ribosyl)imidazole + ADP + phosphate + H(+). Its pathway is purine metabolism; IMP biosynthesis via de novo pathway; 5-amino-1-(5-phospho-D-ribosyl)imidazole from N(2)-formyl-N(1)-(5-phospho-D-ribosyl)glycinamide: step 2/2. In Alcanivorax borkumensis (strain ATCC 700651 / DSM 11573 / NCIMB 13689 / SK2), this protein is Phosphoribosylformylglycinamidine cyclo-ligase.